The chain runs to 980 residues: Serine/threonine-protein phosphatase 4 regulatory subunit 3 (980 aa).

The 105-residue stretch at 1-105 (MTTDTRRRVK…EKICQVQGKD (105 aa)) folds into the WH1 domain. Disordered regions lie at residues 640-668 (RDKM…RQME), 695-861 (VSEK…SLCD), and 885-980 (VTAA…ARQA). The span at 695–708 (VSEKNGPQTQNQQK) shows a compositional bias: polar residues. 4 stretches are compositionally biased toward low complexity: residues 709–749 (SSPP…SSSP), 757–789 (QTQA…QQTQ), 803–859 (EAPQ…AASL), and 885–926 (VTAA…SPAS). Residues 929–939 (QDANSTEGTSS) show a composition bias toward polar residues. Basic and acidic residues predominate over residues 940 to 951 (EADKTTAKKGLV). Acidic residues predominate over residues 953–968 (YESDSGEDDYEEDEYS).

This sequence belongs to the SMEK family. As to quaternary structure, serine/threonine-protein phosphatase 4 (PP4) occurs in different assemblies of the catalytic and one or more regulatory subunits. Probably part of a PP4 PPP4C-PPP4R2-PPP4R3 complex containing Pp4-19C, PPP4R2r and flfl. Interacts with mira. As to expression, expressed in neuroblasts.

It is found in the nucleus. The protein resides in the membrane. The protein localises to the cytoplasm. Its function is as follows. Regulatory subunit of serine/threonine-protein phosphatase 4. The probable PP4 complex Pp4-19C-PPP4R2r-flfl (PPP4C-PPP4R2-PPP4R3) is required to prevent caspase induced cell death (in vitro). May be involved in DNA damage repair. Key mediator specific for the localization of mira and associated cell fate determinants during both interphase and mitosis. Nuclear Flfl is required to exclude mira/pros from the nucleus when inefficiently bound to the cytoskeleton/cortex, whereas cytosolic or membrane-associated flfl is required for the cortical association and asymmetric localization of mira/pros/brat/stau at metaphase and anaphase. This is Serine/threonine-protein phosphatase 4 regulatory subunit 3 (flfl) from Drosophila melanogaster (Fruit fly).